The following is a 30-amino-acid chain: Snaclec coagulation factor IX/factor X-binding protein subunit A (30 aa).

The 30-residue stretch at Asp-1 to Cys-30 folds into the C-type lectin domain. An intrachain disulfide couples Cys-2 to Cys-13.

It belongs to the snaclec family. Heterodimer of subunits A and B; disulfide-linked. Expressed by the venom gland.

Its subcellular location is the secreted. Anticoagulant protein which binds to the gamma-carboxyglutamic acid-domain regions of factors IX (F9) and factor X (F10) in the presence of calcium with a 1 to 1 stoichiometry. The protein is Snaclec coagulation factor IX/factor X-binding protein subunit A of Bothrops jararaca (Jararaca).